A 982-amino-acid polypeptide reads, in one-letter code: Pentatricopeptide repeat-containing protein At5g62370 (982 aa).

PPR repeat units follow at residues 94 to 129 (DSSC…GIVP), 130 to 164 (DSSV…GYAP), 165 to 199 (SRNS…GSGL), 200 to 234 (WLWC…TRMP), 236 to 270 (PVNL…GYYV), 271 to 305 (DKVM…SFEL), 306 to 340 (DPCI…GVQS), 341 to 376 (NVFT…DISR), 377 to 411 (NVHC…GIVP), 412 to 446 (DHIT…GCGI), 476 to 510 (AAVG…GCTP), 511 to 545 (LPFS…DFVP), 546 to 580 (DVDT…GLRP), 581 to 615 (TVAI…GIQP), 616 to 650 (DEIA…FLRP), 651 to 685 (SSFT…GLSP), 686 to 720 (NVVL…DIKH), 721 to 755 (DHIA…KLLQ), 759 to 789 (RTKP…VKKS), 793 to 827 (NLYL…GIVP), 828 to 858 (NLVT…TNCE), 860 to 894 (DQVM…GINP), 895 to 929 (NKDS…DIWP), and 930 to 964 (RSIN…GRSL).

It belongs to the PPR family. P subfamily.

This is Pentatricopeptide repeat-containing protein At5g62370 from Arabidopsis thaliana (Mouse-ear cress).